A 312-amino-acid chain; its full sequence is MFSKYLVTASSLFVALTSAASTVDLDALLLLPGVESHDGVDTVFSTKDFYQVSFVKSIAPAIVNSSVIFHDVSRGVAMGNVKSRASIFNPEETYYDWEQYQVVNNGDWRTEWAPASDCIWREEKDNSDETPDRFPISVPYNWTSQYSIVDYDTDANEDNLDFRFIKSLLDKKNWLKKINQTVSQSSIMVAPMIRPYNVVQLWYSKDMVWANVQRQYCSGVYPGGTQCSAWSRYYHVDAPTCDEPVASYMTKMLENEVQCPNERNATTLEPLRLNKQGDSDFSLTFEEEEEEETGSKSLWSTLKKIFSKRSIS.

The first 19 residues, 1–19, serve as a signal peptide directing secretion; sequence MFSKYLVTASSLFVALTSA.

This is an uncharacterized protein from Saccharomyces cerevisiae (strain ATCC 204508 / S288c) (Baker's yeast).